A 267-amino-acid chain; its full sequence is Undecaprenyl-diphosphatase (267 aa).

Transmembrane regions (helical) follow at residues 1–21 (MPLLQLILVALIQGVTEFLPV), 40–60 (GQAIDVAVHVGTLAAVVLFFW), 85–105 (LALGLIVATIPTVIFGTFLYF), 112–132 (LRSVAVIGWTMLVFGVVLYIA), 188–208 (IAMLMSIPTIIASGVLLGTEV), 219–239 (DMGIAALLAMASALAALALMM), and 245–265 (VSFTPYVIYRVALGMVLLFIA).

This sequence belongs to the UppP family.

It localises to the cell inner membrane. It carries out the reaction di-trans,octa-cis-undecaprenyl diphosphate + H2O = di-trans,octa-cis-undecaprenyl phosphate + phosphate + H(+). In terms of biological role, catalyzes the dephosphorylation of undecaprenyl diphosphate (UPP). Confers resistance to bacitracin. The chain is Undecaprenyl-diphosphatase from Ruegeria sp. (strain TM1040) (Silicibacter sp.).